The following is a 337-amino-acid chain: MVVLGIETSCDDTSIAVYDSEKGIPSNVVTSQLIHAQFGGVYPEIAAREHTKNFLPVLDKALRDASITLSDIDAIATTFMPGLIVSLVAGVSGAKTLSFSLKKPLIPVHHIEAHIFANFITKEIEYPFLALVVSGGHTELILVKEFEDYIYLGGTLDDAVGEVYDKVARALGLGFPGGPLIDKLAKEGKEAIKFPRPLLNDEENKYNFSFSGLKSAVIREINKGIYKKEDITKSFQNAVVDVLVKKTVLACKEFGINRVVVAGGVSANSQLREEFLNIKDLEVHFPPMHLCTDNGAMVAYTGYKRFKEKGISVSLDFEAKARCRIDKFPQLLRSFHA.

Fe cation is bound by residues H110 and H114. Substrate contacts are provided by residues 132-136 (VVSGG), D165, G178, D182, and N268. Fe cation is bound at residue D293.

It belongs to the KAE1 / TsaD family. The cofactor is Fe(2+).

The protein localises to the cytoplasm. The catalysed reaction is L-threonylcarbamoyladenylate + adenosine(37) in tRNA = N(6)-L-threonylcarbamoyladenosine(37) in tRNA + AMP + H(+). Its function is as follows. Required for the formation of a threonylcarbamoyl group on adenosine at position 37 (t(6)A37) in tRNAs that read codons beginning with adenine. Is involved in the transfer of the threonylcarbamoyl moiety of threonylcarbamoyl-AMP (TC-AMP) to the N6 group of A37, together with TsaE and TsaB. TsaD likely plays a direct catalytic role in this reaction. The chain is tRNA N6-adenosine threonylcarbamoyltransferase from Sulfurihydrogenibium sp. (strain YO3AOP1).